A 1012-amino-acid chain; its full sequence is 5'-3' exoribonuclease 2 (1012 aa).

Residues 264-281 form a CCHC-type zinc finger; it reads GKCFLCGQEGHRAADCEG. Disordered stretches follow at residues 411-439, 888-976, and 990-1012; these read VQQR…AQAS, TFKD…QRQV, and QRKK…PKTA. Residues 415 to 433 are compositionally biased toward basic and acidic residues; the sequence is QSERFRRDKARDKARDNAR. Polar residues predominate over residues 904–914; sequence ITPKKMNSPQR. 2 stretches are compositionally biased toward basic and acidic residues: residues 918–928 and 950–962; these read WKKDETPQSRE and PQRE…KKEN. A compositionally biased stretch (basic residues) spans 990–1002; that stretch reads QRKKEKYLRKKAK.

This sequence belongs to the 5'-3' exonuclease family. XRN2/RAT1 subfamily. As to expression, expressed in roots, leaves, stems and flowers.

The protein localises to the nucleus. Possesses 5'-&gt;3' exoribonuclease activity. Acts as an endogenous post-transcriptional gene silencing (PTGS) suppressor. Degrades miRNA-derived loops, excised during miRNA maturation in the nucleus. Involved in pre-rRNA processing. Involved in the primary exonucleolytic shortening of the 5' external transcribed spacer (5'ETS), required for endonucleolytic processing at site P by the U3 snoRNP complex. Involved with XRN3 in the 5'-end processing of 5.8S and 25S rRNAs. Contributes with XRN3 to polyadenylation-dependent nuclear RNA surveillance. Involved in the degradation of aberrant polyadenylated pre-rRNA through 5'-end processing. This is 5'-3' exoribonuclease 2 from Arabidopsis thaliana (Mouse-ear cress).